The sequence spans 351 residues: L-threonine 3-dehydrogenase (351 aa).

Position 39 (C39) interacts with Zn(2+). Catalysis depends on charge relay system residues T41 and H44. Zn(2+)-binding residues include H64, E65, C94, C97, C100, and C108. NAD(+)-binding positions include I176, D196, R201, 271-273, and 295-296; these read LGI and IY.

This sequence belongs to the zinc-containing alcohol dehydrogenase family. In terms of assembly, homotetramer. Zn(2+) serves as cofactor.

The protein localises to the cytoplasm. It catalyses the reaction L-threonine + NAD(+) = (2S)-2-amino-3-oxobutanoate + NADH + H(+). It participates in amino-acid degradation; L-threonine degradation via oxydo-reductase pathway; glycine from L-threonine: step 1/2. Functionally, catalyzes the NAD(+)-dependent oxidation of L-threonine to 2-amino-3-ketobutyrate. This Francisella tularensis subsp. holarctica (strain OSU18) protein is L-threonine 3-dehydrogenase.